The chain runs to 120 residues: Large ribosomal subunit protein uL22 (120 aa).

It belongs to the universal ribosomal protein uL22 family. As to quaternary structure, part of the 50S ribosomal subunit.

Its function is as follows. This protein binds specifically to 23S rRNA; its binding is stimulated by other ribosomal proteins, e.g. L4, L17, and L20. It is important during the early stages of 50S assembly. It makes multiple contacts with different domains of the 23S rRNA in the assembled 50S subunit and ribosome. In terms of biological role, the globular domain of the protein is located near the polypeptide exit tunnel on the outside of the subunit, while an extended beta-hairpin is found that lines the wall of the exit tunnel in the center of the 70S ribosome. The chain is Large ribosomal subunit protein uL22 from Corynebacterium kroppenstedtii (strain DSM 44385 / JCM 11950 / CIP 105744 / CCUG 35717).